Here is a 174-residue protein sequence, read N- to C-terminus: Gamma-crystallin F (174 aa).

2 Beta/gamma crystallin 'Greek key' domains span residues 2–40 and 41–83; these read GKITFYEDRGFQGRHYECSSDHSNLQPYFSRCNSIRVDS and GCWM…RLIP. The tract at residues 84-87 is connecting peptide; it reads HTGS. Beta/gamma crystallin 'Greek key' domains follow at residues 88-128 and 129-171; these read HRLR…NVLE and GWWV…RRAV.

It belongs to the beta/gamma-crystallin family.

Its function is as follows. Crystallins are the dominant structural components of the vertebrate eye lens. The polypeptide is Gamma-crystallin F (CRYGF) (Bos taurus (Bovine)).